An 875-amino-acid chain; its full sequence is MSGTKPDILWAPHHVDRFVVCDSELSLYHVESTVNSELKAGSLRLSEDSAATLLSINSDTPYMKCVAWYLNYDPECLLAVGQANGRVVLTSLGQDHNSKFKDLIGKEFVPKHARQCNTLAWNPLDSNWLAAGLDKHRADFSVLIWDICSKYTPDIVPMEKVKLSAGETETTLLVTKPLYELGQNDACLSLCWLPRDQKLLLAGMHRNLAIFDLRNTSQKMFVNTKAVQGVTVDPYFHDRVASFYEGQVAIWDLRKFEKPVLTLTEQPKPLTKVAWCPTRTGLLATLTRDSNIIRLYDMQHTPTPIGDETEPTIIERSVQPCDNYIASFAWHPTSQNRMIVVTPNRTMSDFTVFERISLAWSPITSLMWACGRHLYECTEEENDNSLEKDIATKMRLRALSRYGLDTEQVWRNHILAGNEDPQLKSLWYTLHFMKQYTEDMDQKSPGNKGSLVYAGIKSIVKSSLGMVESSRHNWSGLDKQSDIQNLNEERILALQLCGWIKKGTDVDVGPFLNSLVQEGEWERAAAVALFNLDIRRAIQILNEGASSEKGDLNLNVVAMALSGYTDEKNSLWREMCSTLRLQLNNPYLCVMFAFLTSETGSYDGVLYENKVAVRDRVAFACKFLSDTQLNRYIEKLTNEMKEAGNLEGILLTGLTKDGVDLMESYVDRTGDVQTASYCMLQGSPLDVLKDERVQYWIENYRNLLDAWRFWHKRAEFDIHRSKLDPSSKPLAQVFVSCNFCGKSISYSCSAVPHQGRGFSQYGVSGSPTKSKVTSCPGCRKPLPRCALCLINMGTPVSSCPGGTKSDEKVDLSKDKKLAQFNNWFTWCHNCRHGGHAGHMLSWFRDHAECPVSACTCKCMQLDTTGNLVPAETVQP.

WD repeat units follow at residues 58 to 100 (SDTP…NSKF), 111 to 155 (KHAR…TPDI), 182 to 221 (GQND…QKMF), 223 to 261 (NTKA…KPVL), 265 to 306 (EQPK…TPIG), and 395 to 437 (RLRA…KQYT). The segment at 735-781 (VSCNFCGKSISYSCSAVPHQGRGFSQYGVSGSPTKSKVTSCPGCRKP) adopts a C4-type zinc-finger fold. Zn(2+)-binding residues include cysteine 737 and cysteine 740. Serine 759 and serine 766 each carry phosphoserine. Positions 775, 778, 788, 827, 830, 832, 835, 838, 849, 854, and 858 each coordinate Zn(2+). The RING-type; atypical zinc-finger motif lies at 782 to 863 (LPRCALCLIN…CTCKCMQLDT (82 aa)).

This sequence belongs to the WD repeat mio family. In terms of assembly, component of the GATOR2 subcomplex, composed of MIOS, SEC13, SEH1L, WDR24 and WDR59. The GATOR2 complex interacts with CASTOR1 and CASTOR2; the interaction is negatively regulated by arginine. CASTOR1 and CASTOR2 convey leucine availability via direct interaction with MIOS. The GATOR2 complex interacts with SESN1, SESN2 and SESN3; the interaction is negatively regulated by amino acids. Interacts with SAR1A and SAR1B; the interaction is direct, disrupted by leucine and mediates the interaction of SAR1A or SAR1B with the GATOR2 complex to negatively regulate the TORC1 signaling upon leucine deprivation.

The protein localises to the lysosome membrane. The GATOR2 complex is negatively regulated by the upstream amino acid sensors CASTOR1 and SESN2, which sequester the GATOR2 complex in absence of amino acids. In the presence of abundant amino acids, GATOR2 is released from CASTOR1 and SESN2 and activated. In terms of biological role, as a component of the GATOR2 complex, functions as an activator of the amino acid-sensing branch of the mTORC1 signaling pathway. The GATOR2 complex indirectly activates mTORC1 through the inhibition of the GATOR1 subcomplex. GATOR2 probably acts as an E3 ubiquitin-protein ligase toward GATOR1. In the presence of abundant amino acids, the GATOR2 complex mediates ubiquitination of the NPRL2 core component of the GATOR1 complex, leading to GATOR1 inactivation. In the absence of amino acids, GATOR2 is inhibited, activating the GATOR1 complex. Within the GATOR2 complex, MIOS is required to prevent autoubiquitination of WDR24, the catalytic subunit of the complex. The GATOR2 complex is required for brain myelination. This Homo sapiens (Human) protein is GATOR2 complex protein MIOS.